Here is a 106-residue protein sequence, read N- to C-terminus: Phosphoribosyl-ATP pyrophosphatase (106 aa).

Belongs to the PRA-PH family.

It is found in the cytoplasm. The enzyme catalyses 1-(5-phospho-beta-D-ribosyl)-ATP + H2O = 1-(5-phospho-beta-D-ribosyl)-5'-AMP + diphosphate + H(+). The protein operates within amino-acid biosynthesis; L-histidine biosynthesis; L-histidine from 5-phospho-alpha-D-ribose 1-diphosphate: step 2/9. This is Phosphoribosyl-ATP pyrophosphatase from Limosilactobacillus fermentum (strain NBRC 3956 / LMG 18251) (Lactobacillus fermentum).